The chain runs to 903 residues: Chitin synthase 1 (903 aa).

The interval 1–154 is disordered; that stretch reads MDPRYGAQPQ…YQDQPQQGGG (154 aa). Positions 67–79 are enriched in polar residues; that stretch reads DHLNLNAAQSVDN. An N-linked (GlcNAc...) asparagine glycan is attached at Asn79. The segment covering 100–117 has biased composition (low complexity); it reads YYNQPYEPRPQQQPYDQG. The span at 135–150 shows a compositional bias: polar residues; that stretch reads HQPSDAPSEPYQDQPQ. Helical transmembrane passes span 444–464, 543–563, 573–593, 619–639, 654–674, 700–720, 729–749, 828–848, and 875–895; these read SAFG…YVAL, RWLN…LDFL, FAFF…WFAI, ILGV…FVLS, MCWF…FIAV, MLII…LIML, LVQY…YAFC, GVVL…LSSA, and IVLW…MWFL.

The protein belongs to the chitin synthase family. Class I subfamily.

The protein localises to the cell membrane. The catalysed reaction is [(1-&gt;4)-N-acetyl-beta-D-glucosaminyl](n) + UDP-N-acetyl-alpha-D-glucosamine = [(1-&gt;4)-N-acetyl-beta-D-glucosaminyl](n+1) + UDP + H(+). In terms of biological role, polymerizes chitin, a structural polymer of the cell wall and septum, by transferring the sugar moiety of UDP-GlcNAc to the non-reducing end of the growing chitin polymer. Plays an important role in nuclear sorting or distribution. The sequence is that of Chitin synthase 1 from Fusarium oxysporum f. sp. lycopersici (strain 4287 / CBS 123668 / FGSC 9935 / NRRL 34936) (Fusarium vascular wilt of tomato).